Here is a 761-residue protein sequence, read N- to C-terminus: Semaphorin-3D (761 aa).

The signal sequence occupies residues M1–G24. A Sema domain is found at R32 to L519. C105 and C116 are disulfide-bonded. N127 carries N-linked (GlcNAc...) asparagine glycosylation. Disulfide bonds link C134–C143, C274–C386, C298–C346, and C522–C540. One can recognise an Ig-like C2-type domain in the interval P552 to N670. N-linked (GlcNAc...) asparagine glycosylation is present at N595. C653 and C719 are disulfide-bonded. Residues R728 to E754 are compositionally biased toward basic residues. The segment at R728–T761 is disordered.

It belongs to the semaphorin family. Developing spinal cord and developing visual system. Collapsin-1, -2, -3, and -5 bind to overlapping but distinct axon tracts.

It localises to the secreted. Functionally, induces the collapse and paralysis of neuronal growth cones. Could potentially act as repulsive cues toward specific neuronal populations. Binds to neuropilin. The polypeptide is Semaphorin-3D (SEMA3D) (Gallus gallus (Chicken)).